We begin with the raw amino-acid sequence, 89 residues long: Small ribosomal subunit protein uS15 (89 aa).

It belongs to the universal ribosomal protein uS15 family. Part of the 30S ribosomal subunit. Forms a bridge to the 50S subunit in the 70S ribosome, contacting the 23S rRNA.

Functionally, one of the primary rRNA binding proteins, it binds directly to 16S rRNA where it helps nucleate assembly of the platform of the 30S subunit by binding and bridging several RNA helices of the 16S rRNA. Its function is as follows. Forms an intersubunit bridge (bridge B4) with the 23S rRNA of the 50S subunit in the ribosome. This chain is Small ribosomal subunit protein uS15, found in Shewanella woodyi (strain ATCC 51908 / MS32).